The following is a 271-amino-acid chain: Tryptophan synthase alpha chain (271 aa).

Residues glutamate 49 and aspartate 60 each act as proton acceptor in the active site.

This sequence belongs to the TrpA family. As to quaternary structure, tetramer of two alpha and two beta chains.

It catalyses the reaction (1S,2R)-1-C-(indol-3-yl)glycerol 3-phosphate + L-serine = D-glyceraldehyde 3-phosphate + L-tryptophan + H2O. Its pathway is amino-acid biosynthesis; L-tryptophan biosynthesis; L-tryptophan from chorismate: step 5/5. Functionally, the alpha subunit is responsible for the aldol cleavage of indoleglycerol phosphate to indole and glyceraldehyde 3-phosphate. This is Tryptophan synthase alpha chain from Blochmanniella floridana.